A 391-amino-acid chain; its full sequence is Response regulator aspartate phosphatase I (391 aa).

TPR repeat units lie at residues 62–95 (LEFR…EKQG), 150–183 (SYVY…AVQT), 184–217 (VRCQ…SKES), 224–257 (AMSH…FEKS), 275–311 (KQQN…LEGL), and 338–371 (ENFS…RRKI).

This sequence belongs to the Rap family.

It localises to the cytoplasm. Its activity is regulated as follows. Inhibited by PhrI. Functionally, activates ICEBs1 gene expression, excision and transfer by inactivating the ICEBs1 repressor protein ImmR. RapI-mediated induction likely results from an increase in the specific activity of the protease ImmA, which mediates proteolysis of ImmR. In addition, is involved in regulation of sporulation. Acts as a phosphatase that specifically dephosphorylates the sporulation initiation phosphotransferase Spo0F and inhibits its activity. This Bacillus subtilis (strain 168) protein is Response regulator aspartate phosphatase I (rapI).